A 474-amino-acid chain; its full sequence is MSAYETIIGLEVHVQLNTKTKIFCFCATSFGDEPNKNVCPTCLGLPGALPVLNREAVKKAISFGTAINATINQNSVFARKNYFYPDLPKAYQISQFEIPIVGRGSIEIECNNQTKTIGVTRAHLEEDAGKNIHENNYSKVDLNRACTPLLEIVSEPDMRSSDEAIAYLKKLHSIVRFLGISDANMQEGSFRCDANVSIRPKGDCKLYTRVEIKNLNSFKFIQKAIEYEVERQIEAWEEGKYQSEVVQETRLFDTAKGITRSMRGKEEAADYRYFPDPDLLPVFIDENLMREGVKIPEMPDEKRERYINTLGLKPYDAGVLTSSLELALYFESMLEEGASAKGALTWLTTELLGRLKGENTLQTCGVDSKTLATLVKRIEEGKISGKSGKEILDVLMEKGGDVDSLIDSMGLAQINDDGAIIAVIESVLSANADKVAEYKSGKDKLFGFFVGQVMKNSKGANPARVNELLKEKLG.

It belongs to the GatB/GatE family. GatB subfamily. Heterotrimer of A, B and C subunits.

The catalysed reaction is L-glutamyl-tRNA(Gln) + L-glutamine + ATP + H2O = L-glutaminyl-tRNA(Gln) + L-glutamate + ADP + phosphate + H(+). The enzyme catalyses L-aspartyl-tRNA(Asn) + L-glutamine + ATP + H2O = L-asparaginyl-tRNA(Asn) + L-glutamate + ADP + phosphate + 2 H(+). Allows the formation of correctly charged Asn-tRNA(Asn) or Gln-tRNA(Gln) through the transamidation of misacylated Asp-tRNA(Asn) or Glu-tRNA(Gln) in organisms which lack either or both of asparaginyl-tRNA or glutaminyl-tRNA synthetases. The reaction takes place in the presence of glutamine and ATP through an activated phospho-Asp-tRNA(Asn) or phospho-Glu-tRNA(Gln). In Helicobacter hepaticus (strain ATCC 51449 / 3B1), this protein is Aspartyl/glutamyl-tRNA(Asn/Gln) amidotransferase subunit B.